Here is a 280-residue protein sequence, read N- to C-terminus: Golgi to ER traffic protein 2 (280 aa).

Over 1-149 (MPSDREKQRI…IAYNLYQQRK (149 aa)) the chain is Cytoplasmic. The interval 15–59 (RQAKMAKGGASDRLNKILSQGSSVKTSAVSVLDQPQPADHDPEGM) is disordered. Residues 31 to 43 (ILSQGSSVKTSAV) are compositionally biased toward polar residues. The chain crosses the membrane as a helical span at residues 150-170 (VRHRFLVVRMVSILANFVYHF). Topologically, residues 171 to 197 (LTISDFSFSPSANPFIRSIPPTSSVSS) are lumenal. The helical transmembrane segment at 198 to 217 (FFQIFVAIEAVLVAAYIAAS) threads the bilayer. The Cytoplasmic segment spans residues 218-257 (RNVPSNNNGLLVKGISMAAMFVPKLQRFQPLIMKIIGCWD). A helical transmembrane segment spans residues 258 to 278 (TVTFVLNDLGLVVLLFGLISF). Residues 279–280 (RR) are Lumenal-facing.

Belongs to the GET2 family. Component of the Golgi to ER traffic (GET) complex, which is composed of GET1, GET2 and GET3. Within the complex, GET1 and GET2 form a heterotetramer which is stabilized by phosphatidylinositol binding and which binds to the GET3 homodimer.

The protein resides in the endoplasmic reticulum membrane. It is found in the golgi apparatus membrane. In terms of biological role, required for the post-translational delivery of tail-anchored (TA) proteins to the endoplasmic reticulum. Together with GET1, acts as a membrane receptor for soluble GET3, which recognizes and selectively binds the transmembrane domain of TA proteins in the cytosol. The GET complex cooperates with the HDEL receptor ERD2 to mediate the ATP-dependent retrieval of resident ER proteins that contain a C-terminal H-D-E-L retention signal from the Golgi to the ER. This Meyerozyma guilliermondii (strain ATCC 6260 / CBS 566 / DSM 6381 / JCM 1539 / NBRC 10279 / NRRL Y-324) (Yeast) protein is Golgi to ER traffic protein 2.